The following is a 130-amino-acid chain: DNA-directed RNA polymerase subunit omega (130 aa).

A disordered region spans residues 108–130 (TEEELLKGLEGLAPPEEQPEEDE).

Belongs to the RNA polymerase subunit omega family. In terms of assembly, the RNAP catalytic core consists of 2 alpha, 1 beta, 1 beta' and 1 omega subunit. When a sigma factor is associated with the core the holoenzyme is formed, which can initiate transcription.

It catalyses the reaction RNA(n) + a ribonucleoside 5'-triphosphate = RNA(n+1) + diphosphate. Functionally, promotes RNA polymerase assembly. Latches the N- and C-terminal regions of the beta' subunit thereby facilitating its interaction with the beta and alpha subunits. This chain is DNA-directed RNA polymerase subunit omega, found in Rhodopseudomonas palustris (strain ATCC BAA-98 / CGA009).